The primary structure comprises 400 residues: NADPH dehydrogenase 3 (400 aa).

2 residues coordinate FMN: T38 and Q115. Residues H192 and N195 each coordinate substrate. Y197 acts as the Proton donor in catalysis. Residues R244 and R349 each contribute to the FMN site. Y376 lines the substrate pocket.

Homodimer or heterodimer with OYE2. The cofactor is FMN.

The enzyme catalyses A + NADPH + H(+) = AH2 + NADP(+). Functionally, flavin-dependent enoate reductase that catalyzes the chemo- and stereoslective hydrogenation of electron-poor alkenes. The enzyme is reduced by NADPH, and oxygen, quinones, and alpha,beta-unsaturated aldehydes and ketones can act as electron acceptors to complete catalytic turnover. The physiological oxidant remains elusive. Has a prooxidant activity, increasing reactive oxygen species (ROS) levels when overexpressed. Formation of OYE2-OYE3 heterodimers contribute to the induction of programmed cell death upon oxidative stress. This is NADPH dehydrogenase 3 from Saccharomyces cerevisiae (strain ATCC 204508 / S288c) (Baker's yeast).